Here is a 226-residue protein sequence, read N- to C-terminus: UPF0758 protein LL1007 (226 aa).

An MPN domain is found at Gln-103 to Arg-225. His-174, His-176, and Asp-187 together coordinate Zn(2+). The JAMM motif signature appears at His-174–Asp-187.

Belongs to the UPF0758 family.

This chain is UPF0758 protein LL1007, found in Lactococcus lactis subsp. lactis (strain IL1403) (Streptococcus lactis).